We begin with the raw amino-acid sequence, 1331 residues long: Retrotransposon-like protein 1 (1331 aa).

Disordered regions lie at residues 1 to 123 (MMEP…SQED), 128 to 147 (TDLA…SSTV), 556 to 595 (EADE…ETFY), and 971 to 1033 (PSSE…DEPN). Positions 19–30 (SSKQMESSEGSS) are enriched in low complexity. Composition is skewed to acidic residues over residues 109-123 (EMEE…SQED), 128-143 (TDLA…EEPD), and 569-578 (GSDDLSESEP). Residues 992–1001 (RRVATTTRPT) show a composition bias toward low complexity. The span at 1015–1024 (PESEDEEESE) shows a compositional bias: acidic residues. A run of 2 helical transmembrane segments spans residues 1070-1090 (FYRS…LVML) and 1117-1137 (LFLD…TQLF). The tract at residues 1309-1331 (SPPREGATLEELPSDADEDAGLD) is disordered. The segment covering 1320–1331 (LPSDADEDAGLD) has biased composition (acidic residues).

The protein resides in the membrane. Plays an essential role in capillaries endothelial cells for the maintenance of feto-maternal interface and for development of the placenta. The protein is Retrotransposon-like protein 1 (RTL1) of Bos taurus (Bovine).